Here is a 389-residue protein sequence, read N- to C-terminus: tRNA pseudouridine synthase Pus10 (389 aa).

Asp213 (nucleophile) is an active-site residue. 2 residues coordinate substrate: Tyr278 and Tyr350.

This sequence belongs to the pseudouridine synthase Pus10 family.

It catalyses the reaction uridine(54) in tRNA = pseudouridine(54) in tRNA. The catalysed reaction is uridine(55) in tRNA = pseudouridine(55) in tRNA. Its function is as follows. Responsible for synthesis of pseudouridine from uracil-54 and uracil-55 in the psi GC loop of transfer RNAs. This is tRNA pseudouridine synthase Pus10 from Thermoplasma acidophilum (strain ATCC 25905 / DSM 1728 / JCM 9062 / NBRC 15155 / AMRC-C165).